Here is a 480-residue protein sequence, read N- to C-terminus: UDP-N-acetylmuramate--L-alanine ligase (480 aa).

129–135 contributes to the ATP binding site; that stretch reads GTHGKTT.

This sequence belongs to the MurCDEF family.

Its subcellular location is the cytoplasm. It catalyses the reaction UDP-N-acetyl-alpha-D-muramate + L-alanine + ATP = UDP-N-acetyl-alpha-D-muramoyl-L-alanine + ADP + phosphate + H(+). The protein operates within cell wall biogenesis; peptidoglycan biosynthesis. Its function is as follows. Cell wall formation. In Mannheimia succiniciproducens (strain KCTC 0769BP / MBEL55E), this protein is UDP-N-acetylmuramate--L-alanine ligase.